Here is a 563-residue protein sequence, read N- to C-terminus: MENIRSFMSFPASRKVYVEGSRPDVRVPMREIALSPTKTPQGEVENKPVRVYDTTGPYTDPDFEPNVEKGLPLLRRNWIVERGDVEETEPQSTAGRAASLPFARRPLRAKPGKVVTQMHYAKKGIITPEMEFVAIREQIDPEIVRQEVAAGRAIIPSNINHPESEPMIIGRRFHVKINANIGNSAVSSSIENEVEKLLWAVRWGADTVMDLSTGKQIHETREYIIRNSPVPIGTVPIYQALEKVGGVPEKLTWDVYRETLIEQAEQGVDYMTIHAGVRLHYIPLTVNRTTGIVSRGGSIIAQWCLAHHEENFLYTHFEEICEILKQYDVAISLGDGLRPGSIADANDEAQFAELETLGELTKIAWEHDVQVMIEGPGHIPMQKIRENVEREQELCHGAPFYTLGPLVTDIAPGYDHITSAIGAAIIGAYGTSMLCYVTPKEHLGLPNKEDVRVGVVTYKIAAHAADLAKGHPAAQQRDDALSKARFEFRWNDQFNLSLDPERAREYHDETLPAEAAKTAHFCSMCGPKFCSMNISHELQRKIKEEGMKEKANEFVRGGSSLYR.

Substrate contacts are provided by residues asparagine 180, methionine 209, tyrosine 238, histidine 274, serine 294–glycine 296, aspartate 335–arginine 338, and glutamate 374. Histidine 378 provides a ligand contact to Zn(2+). Tyrosine 401 is a binding site for substrate. Histidine 442 contributes to the Zn(2+) binding site. Residues cysteine 522, cysteine 525, and cysteine 530 each contribute to the [4Fe-4S] cluster site.

It belongs to the ThiC family. [4Fe-4S] cluster is required as a cofactor.

It carries out the reaction 5-amino-1-(5-phospho-beta-D-ribosyl)imidazole + S-adenosyl-L-methionine = 4-amino-2-methyl-5-(phosphooxymethyl)pyrimidine + CO + 5'-deoxyadenosine + formate + L-methionine + 3 H(+). It functions in the pathway cofactor biosynthesis; thiamine diphosphate biosynthesis. Catalyzes the synthesis of the hydroxymethylpyrimidine phosphate (HMP-P) moiety of thiamine from aminoimidazole ribotide (AIR) in a radical S-adenosyl-L-methionine (SAM)-dependent reaction. This chain is Phosphomethylpyrimidine synthase, found in Geobacillus thermodenitrificans (strain NG80-2).